A 1050-amino-acid chain; its full sequence is MDAAGRGCHLLPLPAARGPARAPAASSALSPAGLCSGTASASSAAAGAVAMNPSSSAGEERGATGGSSSSGSGAGSCCLGAEGGVDPRGAGAAAAAALEEPAAAGQKEKEEALEEKLRDLTFRKQVSYRKAISRTGLQHLAPAHPLGLPVANGPAKEPRATLDWSENAVNGEHLWLETNVSGDLCYLGEENCQVRFAKSALRRKCAVCKIVVHTACIEQLEKINFRCKPTFREGGSRSPRENFVRHHWVHRRRQEGKCKQCGKGFQQKFSFHSKEIVAISCSWCKQAFHNKVTCFMLHHIEEPCSLGAHAAVIVPPTWIIKVKKPQNSLKASNRKKKRTSFKRKASKRGTEQENKGRPFVIKPISSPLMKPLLVFVNPKSGGNQGTKVLQMFMWYLNPRQVFDLSQEGPKDALELYRKVPNLRILACGGDGTVGWILSILDELQLSPQPPVGVLPLGTGNDLARTLNWGGGYTDEPVSKILCQVEDGTIVQLDRWNLHVERNPDLPPEELEDGVCKLPLNVFNNYFSLGFDAHVTLEFHESREANPEKFNSRFRNKMFYAGAAFSDFLQRSSRDLSKHVKVVCDGTDLTPKIQDLKFQCIVFLNIPRYCAGTMPWGNPGDHHDFEPQRHDDGYIEVIGFTMASLAALQVGGHGERLHQCREVMLLTYKSIPMQVDGEPCRLAPAMIRISLRNQANMVQKSKRRTSMPLLNDPQSVPDRLRIRVNKISLQDYEGLHYDKEKLREASIPLGILVVRGDCDLETCRMYIDRLQEDLQSVSSGSQRVHYQDQETSFPRAISAQRLSPRWCFLDATSADRFYRIDRSQEHLHFVMEISHDEIFILDPDMVVSQQAGTPPGMPDLVVEQASGLSDWWNPALRKRMLSDSGMITPHYEDSDLKDFSHSRVLQSPVSSEDHAILQAVITGDLMKLMESYKNGGSLLIQGPGHCSLLHYAAKTGNGEIVKYILDHGPAELLDMADSETGETALHKAACQRNRAVCQLLVDAGASLRQTDSKGKTPQERAQQAGDPDLAAYLESRQNYKIIGHEDLETAV.

Disordered regions lie at residues 52–73 and 325–356; these read NPSS…SGSG and PQNS…ENKG. The segment covering 332-347 has biased composition (basic residues); the sequence is SNRKKKRTSFKRKASK. Positions 367–502 constitute a DAGKc domain; it reads PLMKPLLVFV…DRWNLHVERN (136 aa). 2 ANK repeats span residues 943-972 and 979-1008; these read GHCS…AELL and TGET…SLRQ. Residues 1048–1050 carry the PDZ-binding motif; that stretch reads TAV.

This sequence belongs to the eukaryotic diacylglycerol kinase family. In terms of assembly, interacts (via PDZ-binding motif) with DLG4; controls the localization of DGKI to the synapse. Interacts (via PDZ-binding motif) with DLG1. Interacts (via PDZ-binding motif) with DLG2. Interacts (via PDZ-binding motif) with DLG3. May interact with RASGRP3; involved in the regulation of RASGRP3 activity. As to expression, specifically expressed in brain (at protein level). Expressed in hippocampus, cerebellum, brain stem and spinal cord (at protein level). Highly expressed in hippocampus, cerebellar cortex, olfactory bulb, and olfactory tubercle and to lower extent in the cerebral cortex, caudate putamen, and thalamus. Not detected in the white matter. Also expressed in eye. Major isoform in brain (at protein level). In terms of tissue distribution, minor isoform in brain (at protein level). As to expression, expressed in brain (at protein level).

The protein resides in the cell projection. It localises to the axon. The protein localises to the dendrite. It is found in the presynapse. Its subcellular location is the postsynapse. The protein resides in the postsynaptic density. It localises to the synaptic cell membrane. The protein localises to the cytoplasmic vesicle. It is found in the secretory vesicle. Its subcellular location is the synaptic vesicle membrane. The protein resides in the cytoplasm. It localises to the cytosol. The protein localises to the nucleus. It carries out the reaction a 1,2-diacyl-sn-glycerol + ATP = a 1,2-diacyl-sn-glycero-3-phosphate + ADP + H(+). The catalysed reaction is 1,2-di-(9Z-octadecenoyl)-sn-glycerol + ATP = 1,2-di-(9Z-octadecenoyl)-sn-glycero-3-phosphate + ADP + H(+). The enzyme catalyses 1-octadecanoyl-2-(9Z,12Z)-octadecadienoyl-sn-glycerol + ATP = 1-octadecanoyl-2-(9Z,12Z-octadecadienoyl)-sn-glycero-3-phosphate + ADP + H(+). It catalyses the reaction 1-octadecanoyl-2-(5Z,8Z,11Z,14Z-eicosatetraenoyl)-sn-glycerol + ATP = 1-octadecanoyl-2-(5Z,8Z,11Z,14Z-eicosatetraenoyl)-sn-glycero-3-phosphate + ADP + H(+). Its pathway is lipid metabolism; glycerolipid metabolism. With respect to regulation, activated by phosphatidylserine. Diacylglycerol kinase that converts diacylglycerol/DAG into phosphatidic acid/phosphatidate/PA and regulates the respective levels of these two bioactive lipids. Thereby, acts as a central switch between the signaling pathways activated by these second messengers with different cellular targets and opposite effects in numerous biological processes. Has probably no preference for any of the diacylglycerols in terms of the acyl chain composition, especially for the acyl chain at the sn-2 position. By controlling the diacylglycerol/DAG-mediated activation of RASGRP3, negatively regulates the Rap1 signaling pathway. May play a role in presynaptic diacylglycerol/DAG signaling and control neurotransmitter release during metabotropic glutamate receptor-dependent long-term depression. Its function is as follows. Has a decreased affinity for ATP and a reduced diacylglycerol kinase activity. Has no preference for any of the diacylglycerols in terms of the acyl chain composition. In terms of biological role, has no diacylglycerol kinase activity. This chain is Diacylglycerol kinase iota, found in Rattus norvegicus (Rat).